Here is a 439-residue protein sequence, read N- to C-terminus: tRNA modification GTPase MnmE (439 aa).

Positions 20, 78, and 116 each coordinate (6S)-5-formyl-5,6,7,8-tetrahydrofolate. Positions 211–364 (GIYVAILGEP…LLSAIQKKVE (154 aa)) constitute a TrmE-type G domain. Residues 221-226 (NSGKST), 240-246 (SEYAGTT), and 265-268 (DTAG) each bind GTP. Residues serine 225 and threonine 246 each coordinate Mg(2+). Lysine 439 provides a ligand contact to (6S)-5-formyl-5,6,7,8-tetrahydrofolate.

This sequence belongs to the TRAFAC class TrmE-Era-EngA-EngB-Septin-like GTPase superfamily. TrmE GTPase family. As to quaternary structure, homodimer. Heterotetramer of two MnmE and two MnmG subunits. K(+) is required as a cofactor.

The protein resides in the cytoplasm. Its function is as follows. Exhibits a very high intrinsic GTPase hydrolysis rate. Involved in the addition of a carboxymethylaminomethyl (cmnm) group at the wobble position (U34) of certain tRNAs, forming tRNA-cmnm(5)s(2)U34. In Ehrlichia ruminantium (strain Gardel), this protein is tRNA modification GTPase MnmE.